The sequence spans 353 residues: Phosphoribosylformylglycinamidine cyclo-ligase (353 aa).

The protein belongs to the AIR synthase family.

The protein localises to the cytoplasm. It carries out the reaction 2-formamido-N(1)-(5-O-phospho-beta-D-ribosyl)acetamidine + ATP = 5-amino-1-(5-phospho-beta-D-ribosyl)imidazole + ADP + phosphate + H(+). It functions in the pathway purine metabolism; IMP biosynthesis via de novo pathway; 5-amino-1-(5-phospho-D-ribosyl)imidazole from N(2)-formyl-N(1)-(5-phospho-D-ribosyl)glycinamide: step 2/2. The protein is Phosphoribosylformylglycinamidine cyclo-ligase of Symbiobacterium thermophilum (strain DSM 24528 / JCM 14929 / IAM 14863 / T).